The following is a 179-amino-acid chain: Large ribosomal subunit protein uL5 (179 aa).

This sequence belongs to the universal ribosomal protein uL5 family. In terms of assembly, part of the 50S ribosomal subunit; part of the 5S rRNA/L5/L18/L25 subcomplex. Contacts the 5S rRNA and the P site tRNA. Forms a bridge to the 30S subunit in the 70S ribosome.

Its function is as follows. This is one of the proteins that bind and probably mediate the attachment of the 5S RNA into the large ribosomal subunit, where it forms part of the central protuberance. In the 70S ribosome it contacts protein S13 of the 30S subunit (bridge B1b), connecting the 2 subunits; this bridge is implicated in subunit movement. Contacts the P site tRNA; the 5S rRNA and some of its associated proteins might help stabilize positioning of ribosome-bound tRNAs. This chain is Large ribosomal subunit protein uL5, found in Prochlorococcus marinus (strain SARG / CCMP1375 / SS120).